Consider the following 334-residue polypeptide: Lipoyl synthase (334 aa).

Positions 71, 76, 82, 97, 101, 104, and 312 each coordinate [4Fe-4S] cluster. Positions 83–301 (WSHGTATFMV…RQEGLRRGFR (219 aa)) constitute a Radical SAM core domain.

This sequence belongs to the radical SAM superfamily. Lipoyl synthase family. Requires [4Fe-4S] cluster as cofactor.

It localises to the cytoplasm. The catalysed reaction is [[Fe-S] cluster scaffold protein carrying a second [4Fe-4S](2+) cluster] + N(6)-octanoyl-L-lysyl-[protein] + 2 oxidized [2Fe-2S]-[ferredoxin] + 2 S-adenosyl-L-methionine + 4 H(+) = [[Fe-S] cluster scaffold protein] + N(6)-[(R)-dihydrolipoyl]-L-lysyl-[protein] + 4 Fe(3+) + 2 hydrogen sulfide + 2 5'-deoxyadenosine + 2 L-methionine + 2 reduced [2Fe-2S]-[ferredoxin]. It functions in the pathway protein modification; protein lipoylation via endogenous pathway; protein N(6)-(lipoyl)lysine from octanoyl-[acyl-carrier-protein]: step 2/2. Functionally, catalyzes the radical-mediated insertion of two sulfur atoms into the C-6 and C-8 positions of the octanoyl moiety bound to the lipoyl domains of lipoate-dependent enzymes, thereby converting the octanoylated domains into lipoylated derivatives. This Halorhodospira halophila (strain DSM 244 / SL1) (Ectothiorhodospira halophila (strain DSM 244 / SL1)) protein is Lipoyl synthase.